The chain runs to 197 residues: Holliday junction branch migration complex subunit RuvA (197 aa).

The domain I stretch occupies residues 1–64; the sequence is MIDSIVGIIQ…LSELECYGFL (64 aa). Residues 65–143 are domain II; it reads TREERELFLK…KEFKVASTSG (79 aa). The interval 144 to 152 is flexible linker; sequence KEEKTYEKL. Residues 152-197 form a domain III region; sequence LEEISLALLSLGYDIDEVNQVLSSEDFSELSLEDGIKLALKKLSKI.

This sequence belongs to the RuvA family. In terms of assembly, homotetramer. Forms an RuvA(8)-RuvB(12)-Holliday junction (HJ) complex. HJ DNA is sandwiched between 2 RuvA tetramers; dsDNA enters through RuvA and exits via RuvB. An RuvB hexamer assembles on each DNA strand where it exits the tetramer. Each RuvB hexamer is contacted by two RuvA subunits (via domain III) on 2 adjacent RuvB subunits; this complex drives branch migration. In the full resolvosome a probable DNA-RuvA(4)-RuvB(12)-RuvC(2) complex forms which resolves the HJ.

It is found in the cytoplasm. The RuvA-RuvB-RuvC complex processes Holliday junction (HJ) DNA during genetic recombination and DNA repair, while the RuvA-RuvB complex plays an important role in the rescue of blocked DNA replication forks via replication fork reversal (RFR). RuvA specifically binds to HJ cruciform DNA, conferring on it an open structure. The RuvB hexamer acts as an ATP-dependent pump, pulling dsDNA into and through the RuvAB complex. HJ branch migration allows RuvC to scan DNA until it finds its consensus sequence, where it cleaves and resolves the cruciform DNA. The sequence is that of Holliday junction branch migration complex subunit RuvA from Caldicellulosiruptor bescii (strain ATCC BAA-1888 / DSM 6725 / KCTC 15123 / Z-1320) (Anaerocellum thermophilum).